Consider the following 255-residue polypeptide: Syntaxin-6 (255 aa).

Residue serine 2 is modified to N-acetylserine. Phosphoserine is present on serine 2. The interaction with BLTP3B stretch occupies residues 2–112 (SMEDPFFVVK…KDQMSASSVQ (111 aa)). The tract at residues 2-168 (SMEDPFFVVK…QAQQQLIVEQ (167 aa)) is required for interaction with VPS51. The Cytoplasmic segment spans residues 2–234 (SMEDPFFVVK…VSHMTSDRRQ (233 aa)). A coiled-coil region spans residues 41–74 (EEIDWTTNELRNNLRSIEWDLEDLDETISIVEAN). Residues serine 129 and serine 152 each carry the phosphoserine modification. One can recognise a t-SNARE coiled-coil homology domain in the interval 163–225 (QLIVEQQDEQ…DNVMKKLAKV (63 aa)). A helical; Anchor for type IV membrane protein membrane pass occupies residues 235–255 (WCAIAILFAVLLVVLTLFLVL).

This sequence belongs to the syntaxin family. As to quaternary structure, identified in a complex containing STX6, STX12, VAMP4 and VTI1A. Binds EEA1. Interacts with VPS45A and GOPC. Interacts with MARCHF2; the interaction promotes MARCHF2-mediated ubiquitination and degradation of CFTR. Interacts with MARCHF3. Interacts with BLTP3B (via C-terminal coiled-coil domain). Interacts with BAIAP3; this interaction is increased in the presence of calcium. Interacts (via N-terminus) with VPS51. Interacts with VPS13B. In terms of tissue distribution, widely expressed, with relatively higher expression in brain, lung and kidney.

The protein localises to the golgi apparatus membrane. It localises to the golgi apparatus. Its subcellular location is the trans-Golgi network membrane. The protein resides in the recycling endosome membrane. Its function is as follows. SNARE promoting movement of transport vesicles to target membranes. Targets endosomes to the trans-Golgi network, and may therefore function in retrograde trafficking. Together with SNARE STX12, promotes movement of vesicles from endosomes to the cell membrane, and may therefore function in the endocytic recycling pathway. In Rattus norvegicus (Rat), this protein is Syntaxin-6 (Stx6).